A 179-amino-acid chain; its full sequence is Large ribosomal subunit protein uL5 (179 aa).

The protein belongs to the universal ribosomal protein uL5 family. As to quaternary structure, part of the 50S ribosomal subunit; part of the 5S rRNA/L5/L18/L25 subcomplex. Contacts the 5S rRNA and the P site tRNA. Forms a bridge to the 30S subunit in the 70S ribosome.

Its function is as follows. This is one of the proteins that bind and probably mediate the attachment of the 5S RNA into the large ribosomal subunit, where it forms part of the central protuberance. In the 70S ribosome it contacts protein S13 of the 30S subunit (bridge B1b), connecting the 2 subunits; this bridge is implicated in subunit movement. Contacts the P site tRNA; the 5S rRNA and some of its associated proteins might help stabilize positioning of ribosome-bound tRNAs. This Francisella tularensis subsp. novicida (strain U112) protein is Large ribosomal subunit protein uL5.